Reading from the N-terminus, the 304-residue chain is 3-diazoavenalumate denitrifying reductase (304 aa).

This sequence belongs to the NAD(P)-dependent epimerase/dehydratase family.

The enzyme catalyses 3-diazoavenalumate + NADPH + H(+) = avenalumate + N2 + NADP(+). The catalysed reaction is 3-diazoavenalumate + NADH + H(+) = avenalumate + N2 + NAD(+). It carries out the reaction (E)-3-diazocoumarate + NADPH = N2 + (E)-4-coumarate + NADP(+). It catalyses the reaction (E)-3-diazocoumarate + NADH = N2 + (E)-4-coumarate + NAD(+). In terms of biological role, oxidoreductase involved in the biosynthesis of avenalumic acid (AVA). Catalyzes the denitrification of 3-diazoavenalumic acid (3-DAA) to produce AVA. It can also act on 3-diazocoumaric acid (3-DCA). Can use NADPH or NADH as a reductant, with a preference for NADPH. In Streptomyces sp, this protein is 3-diazoavenalumate denitrifying reductase.